The following is a 1054-amino-acid chain: Kinesin-like protein KIN-7G (1054 aa).

One can recognise a Kinesin motor domain in the interval 17 to 341 (KIFVSVRLRP…LLFASCAKEV (325 aa)). 105-112 (GQTSSGKT) serves as a coordination point for ATP. 2 coiled-coil regions span residues 350 to 425 (VMSD…IGEA) and 611 to 640 (TETAEEKEEKEETEEKEEEEEERVKEVSSV). Disordered stretches follow at residues 600–648 (CEPE…KEKS) and 740–760 (ERAESNLKPSNSKRPPLPKHI). Positions 613 to 631 (TAEEKEEKEETEEKEEEEE) are enriched in acidic residues.

The protein belongs to the TRAFAC class myosin-kinesin ATPase superfamily. Kinesin family. KIN-7 subfamily.

This chain is Kinesin-like protein KIN-7G, found in Arabidopsis thaliana (Mouse-ear cress).